Consider the following 707-residue polypeptide: SPX domain-containing membrane protein At4g11810 (707 aa).

Residues 2–145 (VAFGKKLKER…GYRFTNYYVK (144 aa)) form the SPX domain. Helical transmembrane passes span 252–272 (FMSL…TYII), 283–303 (LGAA…AQLF), 320–340 (LIFS…AYDF), 342–361 (SLAL…ARAV), 380–400 (AGFV…AGLL), and 416–436 (LPGW…AISF). The span at 481–498 (EETEHDEEDDGDGSEESS) shows a compositional bias: acidic residues. The disordered stretch occupies residues 481–503 (EETEHDEEDDGDGSEESSDDSRK). A run of 5 helical transmembrane segments spans residues 523 to 543 (LLIY…SSVV), 557 to 577 (IFLF…GSYI), 586 to 606 (ILLA…HVVI), 614 to 634 (VISG…NLSL), and 679 to 699 (MLLN…ILAT).

This sequence belongs to the major facilitator superfamily.

Its subcellular location is the membrane. The protein is SPX domain-containing membrane protein At4g11810 of Arabidopsis thaliana (Mouse-ear cress).